The chain runs to 440 residues: Proline--tRNA ligase (440 aa).

It belongs to the class-II aminoacyl-tRNA synthetase family. ProS type 2 subfamily. As to quaternary structure, homodimer.

The protein localises to the cytoplasm. It catalyses the reaction tRNA(Pro) + L-proline + ATP = L-prolyl-tRNA(Pro) + AMP + diphosphate. In terms of biological role, catalyzes the attachment of proline to tRNA(Pro) in a two-step reaction: proline is first activated by ATP to form Pro-AMP and then transferred to the acceptor end of tRNA(Pro). This Xanthobacter autotrophicus (strain ATCC BAA-1158 / Py2) protein is Proline--tRNA ligase.